The chain runs to 1123 residues: Alpha-mannosidase E (1123 aa).

The N-terminal stretch at 1 to 21 is a signal peptide; the sequence is MNKTKLIKIIFVIGVWILLST. 2 N-linked (GlcNAc...) asparagine glycosylation sites follow: asparagine 2 and asparagine 38. Residues 22–1072 lie on the Extracellular side of the membrane; the sequence is FIINIYNENF…KYNRPNHLAL (1051 aa). Zn(2+)-binding residues include histidine 67 and aspartate 69. A glycan (N-linked (GlcNAc...) asparagine) is linked at asparagine 140. Zn(2+)-binding residues include aspartate 150 and histidine 409. Aspartate 150 functions as the Nucleophile in the catalytic mechanism. N-linked (GlcNAc...) asparagine glycosylation is found at asparagine 521, asparagine 675, asparagine 858, asparagine 887, asparagine 975, and asparagine 990. Residues 1073–1093 traverse the membrane as a helical segment; sequence ILSLSIGTPAGILIIVIALVV. Residues 1094-1123 lie on the Cytoplasmic side of the membrane; it reads IYKKRKNRKTLTSSYSLLNLILKDRADSSP.

The protein belongs to the glycosyl hydrolase 38 family. Zn(2+) serves as cofactor.

The protein resides in the membrane. It carries out the reaction Hydrolysis of terminal, non-reducing alpha-D-mannose residues in alpha-D-mannosides.. The protein is Alpha-mannosidase E (manE) of Dictyostelium discoideum (Social amoeba).